The primary structure comprises 40 residues: Photosystem II reaction center protein J (40 aa).

The helical transmembrane segment at 8–28 (IPLWLIGTVTGILVIGLIGVF) threads the bilayer.

It belongs to the PsbJ family. In terms of assembly, PSII is composed of 1 copy each of membrane proteins PsbA, PsbB, PsbC, PsbD, PsbE, PsbF, PsbH, PsbI, PsbJ, PsbK, PsbL, PsbM, PsbT, PsbX, PsbY, PsbZ, Psb30/Ycf12, at least 3 peripheral proteins of the oxygen-evolving complex and a large number of cofactors. It forms dimeric complexes.

The protein localises to the plastid. Its subcellular location is the chloroplast thylakoid membrane. Its function is as follows. One of the components of the core complex of photosystem II (PSII). PSII is a light-driven water:plastoquinone oxidoreductase that uses light energy to abstract electrons from H(2)O, generating O(2) and a proton gradient subsequently used for ATP formation. It consists of a core antenna complex that captures photons, and an electron transfer chain that converts photonic excitation into a charge separation. In Nymphaea alba (White water-lily), this protein is Photosystem II reaction center protein J.